The sequence spans 964 residues: Adhesion defective protein 3 (964 aa).

The disordered stretch occupies residues 1-32 (MADFMDIEPSSHSAKASQYESSAPASSSLGNS). Residues 16 to 32 (ASQYESSAPASSSLGNS) are compositionally biased toward low complexity. Positions 34–66 (PNESLDYYIYDYFVKHNFEEAAQAFLRESKIQI) constitute a LisH domain. Over residues 69–83 (SSSSTAFSPSNNNAP) the composition is skewed to low complexity. Disordered regions lie at residues 69 to 125 (SSSS…EETN), 241 to 273 (PKGT…PASA), 476 to 523 (VSMK…TSRM), 572 to 596 (QTLS…MSMD), and 664 to 914 (APMI…KPIS). 3 stretches are compositionally biased toward polar residues: residues 93–103 (LASPSKISESI), 261–270 (AMQNPHNSFP), and 508–523 (TQAN…TSRM). Over residues 575–589 (SSGNQPPQQSGPNPN) the composition is skewed to low complexity. Polar residues-rich tracts occupy residues 664 to 700 (APMI…TNRN), 707 to 716 (SPHQQFSPSA), 724 to 752 (RSMS…QNKE), 767 to 801 (AFPQ…SSLH), 818 to 828 (TIRTTERSTFS), and 857 to 868 (GGTNSISQDTTQ). Low complexity predominate over residues 869–885 (SLQMQSNSVNSSSMVDA). Residues 894–905 (GDTSALDSNAKN) show a composition bias toward polar residues.

The protein belongs to the FLO8 family.

It is found in the cytoplasm. The protein localises to the nucleus. In terms of biological role, probable transcriptional regulator involved in cell adhesion. This Schizosaccharomyces pombe (strain 972 / ATCC 24843) (Fission yeast) protein is Adhesion defective protein 3 (adn3).